The chain runs to 610 residues: Methionine--tRNA ligase (610 aa).

Residues 12 to 22 (PYANGPRHIGH) carry the 'HIGH' region motif. Zn(2+) contacts are provided by C144, C147, C157, and C160. The 'KMSKS' region signature appears at 348–352 (KFSSS). Position 351 (S351) interacts with ATP.

Belongs to the class-I aminoacyl-tRNA synthetase family. MetG type 1 subfamily. Monomer. It depends on Zn(2+) as a cofactor.

It localises to the cytoplasm. The enzyme catalyses tRNA(Met) + L-methionine + ATP = L-methionyl-tRNA(Met) + AMP + diphosphate. Is required not only for elongation of protein synthesis but also for the initiation of all mRNA translation through initiator tRNA(fMet) aminoacylation. The polypeptide is Methionine--tRNA ligase (Corynebacterium glutamicum (strain R)).